The sequence spans 492 residues: N-succinylglutamate 5-semialdehyde dehydrogenase (492 aa).

220 to 225 provides a ligand contact to NAD(+); it reads GSANTG. Catalysis depends on residues E243 and C277.

Belongs to the aldehyde dehydrogenase family. AstD subfamily.

It carries out the reaction N-succinyl-L-glutamate 5-semialdehyde + NAD(+) + H2O = N-succinyl-L-glutamate + NADH + 2 H(+). The protein operates within amino-acid degradation; L-arginine degradation via AST pathway; L-glutamate and succinate from L-arginine: step 4/5. Functionally, catalyzes the NAD-dependent reduction of succinylglutamate semialdehyde into succinylglutamate. This chain is N-succinylglutamate 5-semialdehyde dehydrogenase, found in Escherichia coli O157:H7.